The chain runs to 308 residues: Acetaldehyde dehydrogenase (308 aa).

An NAD(+)-binding site is contributed by 14–17; the sequence is TGNI. Cys-129 functions as the Acyl-thioester intermediate in the catalytic mechanism. NAD(+) contacts are provided by residues 160–168 and Asn-280; that span reads SAGPGTRQN.

It belongs to the acetaldehyde dehydrogenase family.

The enzyme catalyses acetaldehyde + NAD(+) + CoA = acetyl-CoA + NADH + H(+). This Thermomicrobium roseum (strain ATCC 27502 / DSM 5159 / P-2) protein is Acetaldehyde dehydrogenase.